We begin with the raw amino-acid sequence, 399 residues long: Acetylornithine aminotransferase (399 aa).

Pyridoxal 5'-phosphate-binding positions include 102 to 103 (GA) and phenylalanine 138. A N(2)-acetyl-L-ornithine-binding site is contributed by arginine 141. 223-226 (DEVQ) is a binding site for pyridoxal 5'-phosphate. Lysine 252 carries the N6-(pyridoxal phosphate)lysine modification. Threonine 280 contributes to the pyridoxal 5'-phosphate binding site.

This sequence belongs to the class-III pyridoxal-phosphate-dependent aminotransferase family. ArgD subfamily. In terms of assembly, homodimer. Pyridoxal 5'-phosphate serves as cofactor.

The protein localises to the cytoplasm. The catalysed reaction is N(2)-acetyl-L-ornithine + 2-oxoglutarate = N-acetyl-L-glutamate 5-semialdehyde + L-glutamate. The protein operates within amino-acid biosynthesis; L-arginine biosynthesis; N(2)-acetyl-L-ornithine from L-glutamate: step 4/4. The sequence is that of Acetylornithine aminotransferase from Ralstonia nicotianae (strain ATCC BAA-1114 / GMI1000) (Ralstonia solanacearum).